We begin with the raw amino-acid sequence, 387 residues long: Penicillopepsin-1 (387 aa).

The first 19 residues, 1-19 (MVNSKTVVSALALSALAAA), serve as a signal peptide directing secretion. The propeptide at 20 to 66 (APAPSSTTSFSINQVAVKKPAIHPAVKYAKALAKYHAEIPSNVASAA) is activation peptide. The region spanning 85–384 (YVTPITAGSS…DGDNLQLGFA (300 aa)) is the Peptidase A1 domain. Catalysis depends on residues D101 and D279. N-linked (GlcNAc...) asparagine glycosylation is present at N304. A disulfide bridge connects residues C315 and C347.

This sequence belongs to the peptidase A1 family. In terms of assembly, monomer.

It localises to the secreted. It catalyses the reaction Hydrolysis of proteins with broad specificity similar to that of pepsin A, preferring hydrophobic residues at P1 and P1', but also cleaving 20-Gly-|-Glu-21 in the B chain of insulin. Clots milk, and activates trypsinogen.. Secreted aspartic endopeptidase that allows assimilation of proteinaceous substrates. The scissile peptide bond is attacked by a nucleophilic water molecule activated by two aspartic residues in the active site. Shows a broad primary substrate specificity. Favors hydrophobic residues at the P1 and P1' positions, but can also activate trypsinogen and hydrolyze the B chain of insulin between positions 'Gly-20' and 'Glu-21'. The polypeptide is Penicillopepsin-1 (pepA) (Talaromyces stipitatus (strain ATCC 10500 / CBS 375.48 / QM 6759 / NRRL 1006) (Penicillium stipitatum)).